Here is a 547-residue protein sequence, read N- to C-terminus: MAEKPATVNAELVKEMDAAPKKYPYSLDSEGKANYCPVWRFTQPHMMAFHLSWICFFMSFVATFAPASLAPIIRDDLFLTKSQLGNAGVAAVCGAIAARIFMGIVVDSIGPRYGAAATMLMTAPAVFCMALVTDFSTFACVRFFIGLSLCMFVCCQFWCGTMFNVKIVGTANAIAAGWGNMGGGACHFIMPLIYQGIKDGGVPGYQAWRWAFFVPGGIYILTATLTLLLGIDHPSGKDYRDLKKEGTLKAKGAMWPVVKCGLGNYRSWILALTYGYSFGVELTVDNVIVEYLFDQFGLNLAVAGALGAIFGLMNLFTRATGGMISDLVAKPFGMRGRIWALWIIQTLGGIFCIVLGKVSNSLSSTIVIMIVFSIFCQQACGLHFGITPFVSRRAYGVVSGLVGAGGNTGAAITQAIWFAGTAPWQLTLSKADGFVYMGIMTIGLTLPLFFIWFPMWGSMLTGPREGAEEEDYYMREWSAEEVASGLHQGSMRFAMESKSQRGTRDKRAAGPARVPQQLRLGARCCQARGGLIRCVLAQSLGATGCSD.

12 helical membrane-spanning segments follow: residues 53 to 73 (WICFFMSFVATFAPASLAPII), 86 to 106 (NAGVAAVCGAIAARIFMGIVV), 113 to 133 (YGAAATMLMTAPAVFCMALVT), 143 to 163 (FFIGLSLCMFVCCQFWCGTMF), 173 to 193 (AIAAGWGNMGGGACHFIMPLI), 211 to 231 (AFFVPGGIYILTATLTLLLGI), 262 to 280 (LGNYRSWILALTYGYSFGV), 296 to 316 (FGLNLAVAGALGAIFGLMNLF), 338 to 358 (IWALWIIQTLGGIFCIVLGKV), 366 to 386 (IVIMIVFSIFCQQACGLHFGI), 400 to 420 (GLVGAGGNTGAAITQAIWFAG), and 433 to 453 (GFVYMGIMTIGLTLPLFFIWF).

It belongs to the major facilitator superfamily. Nitrate/nitrite porter (TC 2.A.1.8) family.

It localises to the cell membrane. With respect to regulation, nitrite transport mediated by system 1 is very sensitive to inhibition by nitrate. Its function is as follows. Involved in nitrate transport, but does not seem to be able to mediate transport by its own. Acts as a dual component transporter with NAR2 (system 1). Imports nitrate with high affinity when expressed with NAR2 in a heterologous system (Xenopus oocytes). Involved in a high affinity and a high capacity transport specific for both nitrate and nitrite. This Chlamydomonas reinhardtii (Chlamydomonas smithii) protein is Nitrate transporter 2.1.